The following is a 384-amino-acid chain: Geranylgeranyl pyrophosphate synthase (384 aa).

2 disordered regions span residues 1–25 (MVPN…TSST) and 39–78 (RPVP…PARY). A compositionally biased stretch (polar residues) spans 47–62 (LGQNNTRNRSSSTTAI). Isopentenyl diphosphate contacts are provided by Lys-112, Arg-115, and His-144. 2 residues coordinate Mg(2+): Asp-151 and Asp-155. Dimethylallyl diphosphate is bound at residue Arg-160. Arg-161 serves as a coordination point for isopentenyl diphosphate. Positions 238, 239, and 272 each coordinate dimethylallyl diphosphate. Position 275 (Asp-275) interacts with Mg(2+). Residues Asn-279, Lys-289, and Lys-299 each contribute to the dimethylallyl diphosphate site.

This sequence belongs to the FPP/GGPP synthase family. The cofactor is Mg(2+).

The catalysed reaction is isopentenyl diphosphate + dimethylallyl diphosphate = (2E)-geranyl diphosphate + diphosphate. It carries out the reaction isopentenyl diphosphate + (2E)-geranyl diphosphate = (2E,6E)-farnesyl diphosphate + diphosphate. It catalyses the reaction isopentenyl diphosphate + (2E,6E)-farnesyl diphosphate = (2E,6E,10E)-geranylgeranyl diphosphate + diphosphate. It participates in secondary metabolite biosynthesis. In terms of biological role, catalyzes the trans-addition of the 3 molecules of isopentenyl diphosphate (IPP) onto dimethylallyl diphosphate (DMAPP) to form geranylgeranyl pyrophosphate (GGPP). GGPP is a precursor for the biosynthesis of many secondary metabolites, including the indole diterpenes nodulisporic acids (NA). In Hypoxylon pulicicidum, this protein is Geranylgeranyl pyrophosphate synthase.